The following is a 204-amino-acid chain: Methyl-CpG-binding domain protein 3-like 2B (204 aa).

A compositionally biased stretch (basic and acidic residues) spans 126 to 137; that stretch reads SLDRAGAERVRS. The tract at residues 126 to 145 is disordered; the sequence is SLDRAGAERVRSPLEPTPGR.

Belongs to the MBD3L family.

In Homo sapiens (Human), this protein is Methyl-CpG-binding domain protein 3-like 2B.